Consider the following 107-residue polypeptide: Nucleoid-associated protein A1I_00660 (107 aa).

A disordered region spans residues Lys81–Phe107.

The protein belongs to the YbaB/EbfC family. As to quaternary structure, homodimer.

The protein localises to the cytoplasm. It is found in the nucleoid. Its function is as follows. Binds to DNA and alters its conformation. May be involved in regulation of gene expression, nucleoid organization and DNA protection. The chain is Nucleoid-associated protein A1I_00660 from Rickettsia bellii (strain OSU 85-389).